A 518-amino-acid chain; its full sequence is Protein nucleotidyltransferase YdiU (518 aa).

Positions 1–10 (MTHLHFDNRL) are enriched in basic and acidic residues. A disordered region spans residues 1-25 (MTHLHFDNRLRQQLPGDPEEGARRR). Residues G100, G102, R103, K123, D135, G136, R193, and R200 each contribute to the ATP site. Residue D270 is the Proton acceptor of the active site. 2 residues coordinate Mg(2+): N271 and D280. D280 contributes to the ATP binding site.

It belongs to the SELO family. Requires Mg(2+) as cofactor. Mn(2+) serves as cofactor.

It catalyses the reaction L-seryl-[protein] + ATP = 3-O-(5'-adenylyl)-L-seryl-[protein] + diphosphate. The catalysed reaction is L-threonyl-[protein] + ATP = 3-O-(5'-adenylyl)-L-threonyl-[protein] + diphosphate. It carries out the reaction L-tyrosyl-[protein] + ATP = O-(5'-adenylyl)-L-tyrosyl-[protein] + diphosphate. The enzyme catalyses L-histidyl-[protein] + UTP = N(tele)-(5'-uridylyl)-L-histidyl-[protein] + diphosphate. It catalyses the reaction L-seryl-[protein] + UTP = O-(5'-uridylyl)-L-seryl-[protein] + diphosphate. The catalysed reaction is L-tyrosyl-[protein] + UTP = O-(5'-uridylyl)-L-tyrosyl-[protein] + diphosphate. Functionally, nucleotidyltransferase involved in the post-translational modification of proteins. It can catalyze the addition of adenosine monophosphate (AMP) or uridine monophosphate (UMP) to a protein, resulting in modifications known as AMPylation and UMPylation. This Xanthomonas euvesicatoria pv. vesicatoria (strain 85-10) (Xanthomonas campestris pv. vesicatoria) protein is Protein nucleotidyltransferase YdiU.